Reading from the N-terminus, the 303-residue chain is Paired immunoglobulin-like type 2 receptor alpha (303 aa).

Residues 1–19 (MGRPLLLPLLPLLLPPAFL) form the signal peptide. Residues 20–197 (QPSGSTGSGP…DSWHISLETA (178 aa)) lie on the Extracellular side of the membrane. One can recognise an Ig-like V-type domain in the interval 32-150 (LYGVTQPKHL…SIEGTKLSIT (119 aa)). Asparagine 100 is a glycosylation site (N-linked (GlcNAc...) asparagine). The chain crosses the membrane as a helical span at residues 198 to 218 (VGVAVAVTVLGIMILGLICLL). Topologically, residues 219–303 (RWRRRKGQQR…NETLYSVLKA (85 aa)) are cytoplasmic. The tract at residues 226–296 (QQRTKATTPA…RPLKSPQNET (71 aa)) is disordered. 2 consecutive short sequence motifs (ITIM motif) follow at residues 267 to 272 (IVYASL) and 296 to 301 (TLYSVL).

In terms of assembly, monomer. Interacts with PTPN6/SHP-1 and PTPN11/SHP-2 upon tyrosine phosphorylation. As to quaternary structure, (Microbial infection) Interacts with herpes simplex virus 1 glycoprotein B. According to PubMed:10660620, N- and O-glycosylated. According to PubMed:10903717, only N-glycosylated. Post-translationally, phosphorylated on tyrosine residues. As to expression, predominantly detected in hemopoietic tissues and is expressed by monocytes, macrophages, and granulocytes, but not by lymphocytes. Also strongly expressed by dendritic cells (DC); preferentially by CD14+/CD1a- DC derived from CD34+ progenitors. Also expressed by CD11c+ blood and tonsil DC, but not by CD11c- DC precursors.

Its subcellular location is the cell membrane. It localises to the secreted. In terms of biological role, paired receptors consist of highly related activating and inhibitory receptors and are widely involved in the regulation of the immune system. PILRA is thought to act as a cellular signaling inhibitory receptor by recruiting cytoplasmic phosphatases like PTPN6/SHP-1 and PTPN11/SHP-2 via their SH2 domains that block signal transduction through dephosphorylation of signaling molecules. Receptor for PIANP. Functionally, (Microbial infection) Acts as an entry co-receptor for herpes simplex virus 1. This chain is Paired immunoglobulin-like type 2 receptor alpha (PILRA), found in Homo sapiens (Human).